The sequence spans 504 residues: Putative glycerol-3-phosphate transporter 2 (504 aa).

12 consecutive transmembrane segments (helical) span residues 31–51 (LSFK…YIAF), 84–104 (ALLG…MFVA), 116–136 (FLTI…VAFW), 145–165 (FLAV…CIVA), 178–198 (MIMG…SLIA), 210–230 (FLGP…FLPV), 280–302 (IPGV…TFLY), 324–344 (GNLS…AGYI), 352–372 (AITA…YRVF), 378–398 (TINV…FALI), 424–444 (AIID…TGYI), and 452–472 (VFYM…KLII).

Belongs to the major facilitator superfamily. Organophosphate:Pi antiporter (OPA) (TC 2.A.1.4) family. In terms of tissue distribution, expressed in the root-hair differentiation zone.

It localises to the membrane. The sequence is that of Putative glycerol-3-phosphate transporter 2 from Arabidopsis thaliana (Mouse-ear cress).